Consider the following 86-residue polypeptide: Neurotoxin-like protein NTL2 (86 aa).

Residues 1-21 (MKTLLLSLVVVTIVCLDLGYT) form the signal peptide. 4 disulfides stabilise this stretch: Cys-24–Cys-45, Cys-38–Cys-63, Cys-67–Cys-78, and Cys-79–Cys-84.

It belongs to the three-finger toxin family. Short-chain subfamily. Orphan group I sub-subfamily. As to expression, expressed by the venom gland.

It is found in the secreted. The chain is Neurotoxin-like protein NTL2 from Naja atra (Chinese cobra).